A 148-amino-acid polypeptide reads, in one-letter code: UPF0178 protein SUN_1096 (148 aa).

It belongs to the UPF0178 family.

This is UPF0178 protein SUN_1096 from Sulfurovum sp. (strain NBC37-1).